Reading from the N-terminus, the 185-residue chain is Adenine phosphoribosyltransferase (185 aa).

Belongs to the purine/pyrimidine phosphoribosyltransferase family. As to quaternary structure, homodimer.

It is found in the cytoplasm. The catalysed reaction is AMP + diphosphate = 5-phospho-alpha-D-ribose 1-diphosphate + adenine. The protein operates within purine metabolism; AMP biosynthesis via salvage pathway; AMP from adenine: step 1/1. Functionally, catalyzes a salvage reaction resulting in the formation of AMP, that is energically less costly than de novo synthesis. This Arthrobacter sp. (strain FB24) protein is Adenine phosphoribosyltransferase.